A 108-amino-acid chain; its full sequence is Small ribosomal subunit protein uS10 (108 aa).

It belongs to the universal ribosomal protein uS10 family. Part of the 30S ribosomal subunit.

Involved in the binding of tRNA to the ribosomes. In Rhodopirellula baltica (strain DSM 10527 / NCIMB 13988 / SH1), this protein is Small ribosomal subunit protein uS10.